Here is a 295-residue protein sequence, read N- to C-terminus: Cytidine deaminase (295 aa).

2 CMP/dCMP-type deaminase domains span residues 48 to 168 and 187 to 295; these read TDSE…FGPA and KETD…YVAA. Residue 89-91 coordinates substrate; it reads NME. His-102 contributes to the Zn(2+) binding site. Residue Glu-104 is the Proton donor of the active site. Zn(2+)-binding residues include Cys-129 and Cys-132.

The protein belongs to the cytidine and deoxycytidylate deaminase family. Homodimer. Zn(2+) is required as a cofactor.

It carries out the reaction cytidine + H2O + H(+) = uridine + NH4(+). The catalysed reaction is 2'-deoxycytidine + H2O + H(+) = 2'-deoxyuridine + NH4(+). Functionally, this enzyme scavenges exogenous and endogenous cytidine and 2'-deoxycytidine for UMP synthesis. In Photobacterium profundum (strain SS9), this protein is Cytidine deaminase.